The sequence spans 69 residues: uncharacterized protein (69 aa).

It is found in the mitochondrion. This is an uncharacterized protein from Marchantia polymorpha (Common liverwort).